The following is a 257-amino-acid chain: Zinc transporter ZupT (257 aa).

A run of 8 helical transmembrane segments spans residues 5–25 (LILT…GVLG), 32–52 (LLAF…LMEM), 61–81 (GMSP…YLGL), 109–129 (AILL…ATFV), 137–157 (LGFG…LAVV), 171–191 (ILWA…AWLI), 195–215 (MISP…MVAL), and 236–256 (GVLC…TAGI). The Fe(2+) site is built by Asn-120 and Glu-123. Zn(2+) is bound by residues Glu-123 and His-148. Fe(2+) contacts are provided by Asn-149, Glu-152, and Glu-181. Glu-152 is a Zn(2+) binding site.

Belongs to the ZIP transporter (TC 2.A.5) family. ZupT subfamily.

The protein resides in the cell inner membrane. It carries out the reaction Zn(2+)(in) = Zn(2+)(out). In terms of biological role, mediates zinc uptake. May also transport other divalent cations. The chain is Zinc transporter ZupT from Shigella dysenteriae serotype 1 (strain Sd197).